The primary structure comprises 104 residues: Pterin-4-alpha-carbinolamine dehydratase (104 aa).

Alanine 2 is modified (N-acetylalanine). Substrate is bound by residues 61-63 (DHH) and 78-81 (STHE).

Belongs to the pterin-4-alpha-carbinolamine dehydratase family. Homotetramer and homodimer. Heterotetramer with HNF1A; formed by a dimer of dimers. Interacts with HNF1B (via HNF-p1 domain); the interaction increases HNF1B transactivation activity. In terms of tissue distribution, mainly expressed in the liver, in pancreatic cells, and in the kidney, especially in the distal convoluted tubule, in the cortical thick ascending limb of Henle's loop and in the connecting tubule.

It localises to the cytoplasm. Its subcellular location is the nucleus. It catalyses the reaction (4aS,6R)-4a-hydroxy-L-erythro-5,6,7,8-tetrahydrobiopterin = (6R)-L-erythro-6,7-dihydrobiopterin + H2O. Its function is as follows. Involved in tetrahydrobiopterin biosynthesis. Seems to both prevent the formation of 7-pterins and accelerate the formation of quinonoid-BH2. Coactivator for HNF1A-dependent transcription. Regulates the dimerization of homeodomain protein HNF1A and enhances its transcriptional activity. Also acts as a coactivator for HNF1B-dependent transcription. The polypeptide is Pterin-4-alpha-carbinolamine dehydratase (Pcbd1) (Mus musculus (Mouse)).